A 482-amino-acid polypeptide reads, in one-letter code: Adenylyltransferase and sulfurtransferase uba4 (482 aa).

ATP is bound by residues glycine 93, aspartate 114, 121–125 (SNLHR), lysine 138, and 182–183 (DN). 2 residues coordinate Zn(2+): cysteine 231 and cysteine 234. The active-site Glycyl thioester intermediate; for adenylyltransferase activity is the cysteine 248. Positions 309 and 312 each coordinate Zn(2+). Positions 362–480 (EEKEPTIIDV…WKEQVDPEWP (119 aa)) constitute a Rhodanese domain. Cysteine 435 acts as the Cysteine persulfide intermediate; for sulfurtransferase activity in catalysis.

In the N-terminal section; belongs to the HesA/MoeB/ThiF family. UBA4 subfamily. Zn(2+) is required as a cofactor.

The protein resides in the cytoplasm. It localises to the cytosol. The enzyme catalyses [molybdopterin-synthase sulfur-carrier protein]-C-terminal Gly-Gly + ATP + H(+) = [molybdopterin-synthase sulfur-carrier protein]-C-terminal Gly-Gly-AMP + diphosphate. It carries out the reaction [molybdopterin-synthase sulfur-carrier protein]-C-terminal Gly-Gly-AMP + S-sulfanyl-L-cysteinyl-[cysteine desulfurase] + AH2 = [molybdopterin-synthase sulfur-carrier protein]-C-terminal-Gly-aminoethanethioate + L-cysteinyl-[cysteine desulfurase] + A + AMP + 2 H(+). It participates in tRNA modification; 5-methoxycarbonylmethyl-2-thiouridine-tRNA biosynthesis. It functions in the pathway cofactor biosynthesis; molybdopterin biosynthesis. In terms of biological role, plays a central role in 2-thiolation of mcm(5)S(2)U at tRNA wobble positions of cytosolic tRNA(Lys), tRNA(Glu) and tRNA(Gln). Also essential during biosynthesis of the molybdenum cofactor. Acts by mediating the C-terminal thiocarboxylation of sulfur carriers urm1 and mocs2a. Its N-terminus first activates urm1 and mocs2a as acyl-adenylates (-COAMP), then the persulfide sulfur on the catalytic cysteine is transferred to urm1 and mocs2a to form thiocarboxylation (-COSH) of their C-terminus. The reaction probably involves hydrogen sulfide that is generated from the persulfide intermediate and that acts as a nucleophile towards urm1 and mocs2a. Subsequently, a transient disulfide bond is formed. Does not use thiosulfate as sulfur donor; nfs1 probably acting as a sulfur donor for thiocarboxylation reactions. This chain is Adenylyltransferase and sulfurtransferase uba4, found in Aspergillus niger (strain ATCC MYA-4892 / CBS 513.88 / FGSC A1513).